The sequence spans 463 residues: ATP synthase subunit beta (463 aa).

Residue 152 to 159 coordinates ATP; the sequence is GGAGVGKT.

Belongs to the ATPase alpha/beta chains family. In terms of assembly, F-type ATPases have 2 components, CF(1) - the catalytic core - and CF(0) - the membrane proton channel. CF(1) has five subunits: alpha(3), beta(3), gamma(1), delta(1), epsilon(1). CF(0) has three main subunits: a(1), b(2) and c(9-12). The alpha and beta chains form an alternating ring which encloses part of the gamma chain. CF(1) is attached to CF(0) by a central stalk formed by the gamma and epsilon chains, while a peripheral stalk is formed by the delta and b chains.

The protein localises to the cell inner membrane. It catalyses the reaction ATP + H2O + 4 H(+)(in) = ADP + phosphate + 5 H(+)(out). Produces ATP from ADP in the presence of a proton gradient across the membrane. The catalytic sites are hosted primarily by the beta subunits. The sequence is that of ATP synthase subunit beta from Shewanella baltica (strain OS223).